The sequence spans 826 residues: Glycerol-3-phosphate acyltransferase 1, mitochondrial (826 aa).

Over 1 to 87 the chain is Cytoplasmic; sequence MDESALTLGT…FFNPSIPSLG (87 aa). An important for mitochondrial localization region spans residues 80–120; the sequence is NPSIPSLGLRNVIYINETHTRHRGWLARRLSYVLFIQERDV. Residues 88 to 118 lie within the membrane without spanning it; sequence LRNVIYINETHTRHRGWLARRLSYVLFIQER. Topologically, residues 119–826 are cytoplasmic; the sequence is DVHKGMFATN…LEYILSFVVL (708 aa). Positions 230 to 235 match the HXXXXD motif motif; the sequence is HRSHID. CoA is bound by residues R278, R279, K288, R293, and R328. S380 bears the Phosphoserine mark. R462 is a binding site for CoA. Residues S686 and S693 each carry the phosphoserine modification. K778 and K782 each carry N6-acetyllysine.

This sequence belongs to the GPAT/DAPAT family.

It localises to the mitochondrion outer membrane. It catalyses the reaction sn-glycerol 3-phosphate + an acyl-CoA = a 1-acyl-sn-glycero-3-phosphate + CoA. The catalysed reaction is (9Z,12Z)-octadecadienoyl-CoA + sn-glycerol 3-phosphate = 1-(9Z,12Z)-octadecadienoyl-sn-glycero-3-phosphate + CoA. The enzyme catalyses sn-glycerol 3-phosphate + (9Z)-octadecenoyl-CoA = 1-(9Z-octadecenoyl)-sn-glycero-3-phosphate + CoA. It carries out the reaction sn-glycerol 3-phosphate + octadecanoyl-CoA = 1-octadecanoyl-sn-glycero-3-phosphate + CoA. It catalyses the reaction sn-glycerol 3-phosphate + hexadecanoyl-CoA = 1-hexadecanoyl-sn-glycero-3-phosphate + CoA. The catalysed reaction is dodecanoyl-CoA + sn-glycerol 3-phosphate = 1-dodecanoyl-sn-glycerol 3-phosphate + CoA. The enzyme catalyses 1-acyl-sn-glycero-3-phospho-(1'-sn-glycerol) + an acyl-CoA = a 1,2-diacyl-sn-glycero-3-phospho-(1'-sn-glycerol) + CoA. The protein operates within phospholipid metabolism; CDP-diacylglycerol biosynthesis; CDP-diacylglycerol from sn-glycerol 3-phosphate: step 1/3. Its function is as follows. Mitochondrial membrane protein that catalyzes the essential first step of biosynthesis of glycerolipids such as triglycerides, phosphatidic acids and lysophosphatidic acids. Esterifies acyl-group from acyl-coenzyme A (acyl-CoA) to the sn-1 position of glycerol-3-phosphate, to produce lysophosphatidic acid. Has a narrow hydrophobic binding cleft that selects for a linear acyl chain. Catalytic activity is higher for substrates with a 16-carbon acyl chain. The sequence is that of Glycerol-3-phosphate acyltransferase 1, mitochondrial from Sus scrofa (Pig).